A 107-amino-acid polypeptide reads, in one-letter code: Class I hydrophobin 3 (107 aa).

The N-terminal stretch at Met1–Ala18 is a signal peptide. 4 disulfide bridges follow: Cys26/Cys86, Cys33/Cys80, Cys34/Cys67, and Cys87/Cys100. N-linked (GlcNAc...) asparagine glycosylation is found at Asn35 and Asn89.

It belongs to the fungal hydrophobin family. In terms of assembly, self-assembles to form functional amyloid fibrils called rodlets. Self-assembly into fibrillar rodlets occurs spontaneously at hydrophobic:hydrophilic interfaces and the rodlets further associate laterally to form amphipathic monolayers.

The protein localises to the secreted. Its subcellular location is the cell wall. Its function is as follows. Aerial growth, conidiation, and dispersal of filamentous fungi in the environment rely upon a capability of their secreting small amphipathic proteins called hydrophobins (HPBs) with low sequence identity. Class I can self-assemble into an outermost layer of rodlet bundles on aerial cell surfaces, conferring cellular hydrophobicity that supports fungal growth, development and dispersal; whereas Class II form highly ordered films at water-air interfaces through intermolecular interactions but contribute nothing to the rodlet structure. Pnh3 is a class I hydrophobin that might be involved in the attachment of the hydrophilic wall of hyphae to the hydrophobic surface of wood under inorganic phosphate (Pi)-deficient conditions and enable the mycelium to degrade efficiently the components of wood and to acquire nutrients containing Pi. The polypeptide is Class I hydrophobin 3 (Pholiota nameko).